A 436-amino-acid chain; its full sequence is Histidinol dehydrogenase (436 aa).

NAD(+) contacts are provided by tyrosine 135, glutamine 197, and asparagine 220. Substrate-binding residues include threonine 243, glutamine 265, and histidine 268. The Zn(2+) site is built by glutamine 265 and histidine 268. Residues glutamate 334 and histidine 335 each act as proton acceptor in the active site. Histidine 335, aspartate 368, glutamate 422, and histidine 427 together coordinate substrate. Aspartate 368 is a Zn(2+) binding site. Histidine 427 lines the Zn(2+) pocket.

It belongs to the histidinol dehydrogenase family. Zn(2+) serves as cofactor.

The catalysed reaction is L-histidinol + 2 NAD(+) + H2O = L-histidine + 2 NADH + 3 H(+). It participates in amino-acid biosynthesis; L-histidine biosynthesis; L-histidine from 5-phospho-alpha-D-ribose 1-diphosphate: step 9/9. In terms of biological role, catalyzes the sequential NAD-dependent oxidations of L-histidinol to L-histidinaldehyde and then to L-histidine. In Deinococcus radiodurans (strain ATCC 13939 / DSM 20539 / JCM 16871 / CCUG 27074 / LMG 4051 / NBRC 15346 / NCIMB 9279 / VKM B-1422 / R1), this protein is Histidinol dehydrogenase.